The primary structure comprises 525 residues: Sodium-dependent lysophosphatidylcholine symporter 1 (525 aa).

A disordered region spans residues 1–29 (MEKESENASCAGLLGQKNEPGSPTQSRSG). Topologically, residues 1–32 (MEKESENASCAGLLGQKNEPGSPTQSRSGKHK) are cytoplasmic. Residues 33–62 (LSVCSKICFAIGGAPYQITGCALGFFLQIF) traverse the membrane as a helical segment. The Extracellular portion of the chain corresponds to 63-73 (LLDIAQVPPFY). A helical membrane pass occupies residues 74-94 (ASIILFSGRVWDAITDPLVGF). The Cytoplasmic segment spans residues 95–106 (FVSKSSWTRLGR). The chain crosses the membrane as a helical span at residues 107–126 (LLPWVVFSTPFAVVSYLLIW). The Extracellular segment spans residues 127 to 137 (FVPGFSGVSMV). A helical membrane pass occupies residues 138–162 (IWYLVFYCLFQTLVTCFHVPYSALT). Over 163 to 169 (MFISKEQ) the chain is Cytoplasmic. Residues 170 to 201 (SDRDSATGYRMTVEVLGTVLGTAIQGQIVGRE) traverse the membrane as a helical segment. Topologically, residues 202-226 (NTPCVEHIRETHLYNTSVIMEDLNI) are extracellular. Cys205 and Cys458 are joined by a disulfide. 2 N-linked (GlcNAc...) asparagine glycosylation sites follow: Asn216 and Asn225. Residues 227 to 260 (THDVESLSSTRDAYMIAAGVICAIYVLCAIILTL) form a helical membrane-spanning segment. The Cytoplasmic portion of the chain corresponds to 261–291 (GVREKRDAYELLSDQPFSFWQGLKLVMSHKP). Residues 292 to 318 (YIKLITGFLFTSLAFMLLEGNFALFLT) traverse the membrane as a helical segment. The Extracellular segment spans residues 319 to 329 (YTMGFRRDFQN). Residues 330–348 (ILLVVMLSATLTVPFWQWF) traverse the membrane as a helical segment. Residues 349-352 (LTRF) lie on the Cytoplasmic side of the membrane. A helical transmembrane segment spans residues 353–374 (GKKTAVYFGISSVIPFLILVVL). The Extracellular portion of the chain corresponds to 375–377 (MES). A helical membrane pass occupies residues 378-414 (NLILAYVVAVAAGLSVAAAFLLPWSMLPDVIDDFILK). The Cytoplasmic portion of the chain corresponds to 415-424 (NPDSHGHEPI). Residues 425 to 451 (FFSFYVFFTKFASGVSLGISTLSLDFA) form a helical membrane-spanning segment. Residues 452–463 (GYQTRACSQPEQ) are Extracellular-facing. A helical membrane pass occupies residues 464–487 (VNLTLKMLICVAPVILILLGLLLF). Residues 488–525 (ILYPINEEKRKQNKKALQLIRESNRDSDSDSLELASNV) lie on the Cytoplasmic side of the membrane.

Belongs to the major facilitator superfamily.

The protein localises to the cell membrane. Its subcellular location is the endoplasmic reticulum membrane. It carries out the reaction a 1-acyl-sn-glycero-3-phosphocholine(in) + Na(+)(in) = a 1-acyl-sn-glycero-3-phosphocholine(out) + Na(+)(out). It catalyses the reaction 1-(4Z,7Z,10Z,13Z,16Z,19Z-docosahexaenoyl)-sn-glycero-3-phosphocholine(in) + Na(+)(in) = 1-(4Z,7Z,10Z,13Z,16Z,19Z-docosahexaenoyl)-sn-glycero-3-phosphocholine(out) + Na(+)(out). The enzyme catalyses 1-(9Z-octadecenoyl)-sn-glycero-3-phosphocholine(in) + Na(+)(in) = 1-(9Z-octadecenoyl)-sn-glycero-3-phosphocholine(out) + Na(+)(out). The catalysed reaction is 1-hexadecanoyl-sn-glycero-3-phosphocholine(in) + Na(+)(in) = 1-hexadecanoyl-sn-glycero-3-phosphocholine(out) + Na(+)(out). It carries out the reaction a 1-acyl-sn-glycero-3-phosphoethanolamine(in) + Na(+)(in) = a 1-acyl-sn-glycero-3-phosphoethanolamine(out) + Na(+)(out). In terms of biological role, sodium-dependent lysophosphatidylcholine (LPC) symporter, which plays an essential role for blood-brain barrier formation and function. Specifically expressed in endothelium of the blood-brain barrier of micro-vessels and transports LPC into the brain. Transport of LPC is essential because it constitutes the major mechanism by which docosahexaenoic acid (DHA), an omega-3 fatty acid that is essential for normal brain growth and cognitive function, enters the brain. Transports LPC carrying long-chain fatty acids such LPC oleate and LPC palmitate with a minimum acyl chain length of 14 carbons. Does not transport docosahexaenoic acid in unesterified fatty acid. The protein is Sodium-dependent lysophosphatidylcholine symporter 1 (mfsd2a) of Xenopus tropicalis (Western clawed frog).